A 574-amino-acid chain; its full sequence is Ribonuclease Y (574 aa).

The helical transmembrane segment at 1-21 threads the bilayer; sequence MSLLDLVLLLLVLGLGGVLLL. Residues 264 to 327 form the KH domain; it reads AVTVVPIPSD…EIARMALEEL (64 aa). The HD domain maps to 390-483; the sequence is VLKHSIQVAH…VAAADALSAA (94 aa).

Belongs to the RNase Y family.

The protein localises to the cell membrane. Endoribonuclease that initiates mRNA decay. The protein is Ribonuclease Y of Thermus thermophilus (strain ATCC BAA-163 / DSM 7039 / HB27).